Reading from the N-terminus, the 581-residue chain is Proteasome-associated ATPase (581 aa).

Residues 1 to 28 (MTSSDLTQRKGLTMSDSTPDTPRSTPED) are disordered. Residues 14-24 (MSDSTPDTPRS) show a composition bias toward polar residues. Positions 27–66 (EDAARRLAVLSAQNERLAQVLGEARGKIVELQQQIEEFAK) form a coiled coil. 248 to 253 (GCGKTL) is an ATP binding site. The segment at 561 to 581 (GSGRSAAGRTIETATSTGQYL) is disordered. The span at 572 to 581 (ETATSTGQYL) shows a compositional bias: polar residues. The tract at residues 580–581 (YL) is docks into pockets in the proteasome alpha-ring.

Belongs to the AAA ATPase family. As to quaternary structure, homohexamer. Assembles into a hexameric ring structure that caps the 20S proteasome core. Strongly interacts with the prokaryotic ubiquitin-like protein Pup through a hydrophobic interface; the interacting region of ARC lies in its N-terminal coiled-coil domain. There is one Pup binding site per ARC hexamer ring. Upon ATP-binding, the C-terminus of ARC interacts with the alpha-rings of the proteasome core, possibly by binding to the intersubunit pockets.

Its pathway is protein degradation; proteasomal Pup-dependent pathway. Its function is as follows. ATPase which is responsible for recognizing, binding, unfolding and translocation of pupylated proteins into the bacterial 20S proteasome core particle. May be essential for opening the gate of the 20S proteasome via an interaction with its C-terminus, thereby allowing substrate entry and access to the site of proteolysis. Thus, the C-termini of the proteasomal ATPase may function like a 'key in a lock' to induce gate opening and therefore regulate proteolysis. This is Proteasome-associated ATPase from Sanguibacter keddieii (strain ATCC 51767 / DSM 10542 / NCFB 3025 / ST-74).